Consider the following 271-residue polypeptide: Sulfur carrier protein FdhD (271 aa).

The active-site Cysteine persulfide intermediate is the cysteine 114.

It belongs to the FdhD family.

Its subcellular location is the cytoplasm. In terms of biological role, required for formate dehydrogenase (FDH) activity. Acts as a sulfur carrier protein that transfers sulfur from IscS to the molybdenum cofactor prior to its insertion into FDH. This is Sulfur carrier protein FdhD from Agrobacterium fabrum (strain C58 / ATCC 33970) (Agrobacterium tumefaciens (strain C58)).